The following is a 382-amino-acid chain: Lipid-A-disaccharide synthase (382 aa).

It belongs to the LpxB family.

The enzyme catalyses 2-N,3-O-bis[(3R)-3-hydroxytetradecanoyl]-alpha-D-glucosaminyl 1-phosphate + UDP-2-N,3-O-bis[(3R)-3-hydroxytetradecanoyl]-alpha-D-glucosamine = lipid A disaccharide (E. coli) + UDP + H(+). It carries out the reaction a lipid X + a UDP-2-N,3-O-bis[(3R)-3-hydroxyacyl]-alpha-D-glucosamine = a lipid A disaccharide + UDP + H(+). The protein operates within glycolipid biosynthesis; lipid IV(A) biosynthesis; lipid IV(A) from (3R)-3-hydroxytetradecanoyl-[acyl-carrier-protein] and UDP-N-acetyl-alpha-D-glucosamine: step 5/6. In terms of biological role, condensation of UDP-2,3-diacylglucosamine and 2,3-diacylglucosamine-1-phosphate to form lipid A disaccharide, a precursor of lipid A, a phosphorylated glycolipid that anchors the lipopolysaccharide to the outer membrane of the cell. The chain is Lipid-A-disaccharide synthase from Shigella dysenteriae serotype 1 (strain Sd197).